An 822-amino-acid chain; its full sequence is Outer dense fiber protein 2 (822 aa).

A disordered region spans residues 26–45 (KGQKTTPAKCQQKHKQKMKG). Coiled-coil stretches lie at residues 113-418 (CKMN…EECA), 452-490 (DKSD…ALMD), and 516-796 (MEEK…NYVQ).

The protein belongs to the ODF2 family. In terms of assembly, self-associates. Associates with microtubules and forms a fibrillar structure partially linked to the microtubule network.

The protein localises to the cytoplasm. It is found in the cytoskeleton. It localises to the microtubule organizing center. Its subcellular location is the centrosome. The protein resides in the cell projection. The protein localises to the cilium. It is found in the centriole. It localises to the spindle pole. Its subcellular location is the flagellum. Its function is as follows. Seems to be a major component of sperm tail outer dense fibers (ODF). ODFs are filamentous structures located on the outside of the axoneme in the midpiece and principal piece of the mammalian sperm tail and may help to maintain the passive elastic structures and elastic recoil of the sperm tail. In Gallus gallus (Chicken), this protein is Outer dense fiber protein 2 (ODF2).